Here is a 222-residue protein sequence, read N- to C-terminus: DnaJ homolog subfamily B member 9 (222 aa).

An N-terminal signal peptide occupies residues 1-23 (MATPQSVFVFAICILMITELILA). Residues 26-90 (SYYDILGVPK…NSRKEYDTIG (65 aa)) enclose the J domain. The segment at 91–222 (HSAFTNGKGQ…VTTYTDCSGQ (132 aa)) is divergent targeting domain. Ser-133 carries the post-translational modification Phosphoserine.

In terms of assembly, interacts with HSPA5/BiP; interaction is direct. Interacts with ERN1/IRE1 (via the luminal region). Interacts with DERL1. Post-translationally, not N-glycosylated.

It is found in the endoplasmic reticulum lumen. Co-chaperone for Hsp70 protein HSPA5/BiP that acts as a key repressor of the ERN1/IRE1-mediated unfolded protein response (UPR). J domain-containing co-chaperones stimulate the ATPase activity of Hsp70 proteins and are required for efficient substrate recognition by Hsp70 proteins. In the unstressed endoplasmic reticulum, interacts with the luminal region of ERN1/IRE1 and selectively recruits HSPA5/BiP: HSPA5/BiP disrupts the dimerization of the active ERN1/IRE1 luminal region, thereby inactivating ERN1/IRE1. Also involved in endoplasmic reticulum-associated degradation (ERAD) of misfolded proteins. Required for survival of B-cell progenitors and normal antibody production. This is DnaJ homolog subfamily B member 9 from Mus musculus (Mouse).